We begin with the raw amino-acid sequence, 157 residues long: Protein EOLA1 (157 aa).

In terms of domain architecture, ASCH spans L6–T92.

Belongs to the EOLA family. As to quaternary structure, interacts with MT2A.

In terms of biological role, may play a role in cell protection during the inflammatory response. In epithelial cells, negatively regulates IL6 production and apoptosis through the regulation of MT2A expression. In Mus musculus (Mouse), this protein is Protein EOLA1.